A 575-amino-acid polypeptide reads, in one-letter code: Dihydroxy-acid dehydratase (575 aa).

Positions 1–25 (MPTTDSARAADIKQPDIKPRSRDVT) are disordered. The segment covering 8 to 25 (RAADIKQPDIKPRSRDVT) has biased composition (basic and acidic residues). Residue cysteine 64 participates in [2Fe-2S] cluster binding. Aspartate 96 is a binding site for Mg(2+). A [2Fe-2S] cluster-binding site is contributed by cysteine 137. Aspartate 138 and lysine 139 together coordinate Mg(2+). Residue lysine 139 is modified to N6-carboxylysine. Cysteine 214 contacts [2Fe-2S] cluster. Mg(2+) is bound at residue glutamate 465. The active-site Proton acceptor is the serine 491.

It belongs to the IlvD/Edd family. In terms of assembly, homodimer. [2Fe-2S] cluster serves as cofactor. Requires Mg(2+) as cofactor.

It catalyses the reaction (2R)-2,3-dihydroxy-3-methylbutanoate = 3-methyl-2-oxobutanoate + H2O. It carries out the reaction (2R,3R)-2,3-dihydroxy-3-methylpentanoate = (S)-3-methyl-2-oxopentanoate + H2O. It functions in the pathway amino-acid biosynthesis; L-isoleucine biosynthesis; L-isoleucine from 2-oxobutanoate: step 3/4. Its pathway is amino-acid biosynthesis; L-valine biosynthesis; L-valine from pyruvate: step 3/4. Its function is as follows. Functions in the biosynthesis of branched-chain amino acids. Catalyzes the dehydration of (2R,3R)-2,3-dihydroxy-3-methylpentanoate (2,3-dihydroxy-3-methylvalerate) into 2-oxo-3-methylpentanoate (2-oxo-3-methylvalerate) and of (2R)-2,3-dihydroxy-3-methylbutanoate (2,3-dihydroxyisovalerate) into 2-oxo-3-methylbutanoate (2-oxoisovalerate), the penultimate precursor to L-isoleucine and L-valine, respectively. The sequence is that of Dihydroxy-acid dehydratase from Mycolicibacterium paratuberculosis (strain ATCC BAA-968 / K-10) (Mycobacterium paratuberculosis).